A 418-amino-acid chain; its full sequence is Serine/threonine-protein kinase Sgk1 (418 aa).

The disordered stretch occupies residues 50–78; it reads PQEPELLNENSSPPPSPSQQINLGPSSNP. Over residues 68-78 the composition is skewed to polar residues; the sequence is QQINLGPSSNP. Positions 85-342 constitute a Protein kinase domain; that stretch reads FQFLKIIGKG…FMEIKNHMFF (258 aa). ATP-binding positions include 91 to 99 and Lys-114; that span reads IGKGSFGKV. Asp-209 (proton acceptor) is an active-site residue. The 76-residue stretch at 343-418 folds into the AGC-kinase C-terminal domain; the sequence is SPINWDDLIN…SYAPPMESYL (76 aa).

This sequence belongs to the protein kinase superfamily. AGC Ser/Thr protein kinase family.

Its subcellular location is the cytoplasm. The protein localises to the nucleus. It is found in the endoplasmic reticulum. It carries out the reaction L-seryl-[protein] + ATP = O-phospho-L-seryl-[protein] + ADP + H(+). The catalysed reaction is L-threonyl-[protein] + ATP = O-phospho-L-threonyl-[protein] + ADP + H(+). In terms of biological role, protein kinase that may play an important role in cellular stress response. Plays an important role in activating certain potassium, sodium, and chloride channels, suggesting an involvement in the regulation of processes such as cell survival, neuronal excitability, and renal sodium excretion. In Xenopus tropicalis (Western clawed frog), this protein is Serine/threonine-protein kinase Sgk1 (sgk1).